Consider the following 368-residue polypeptide: tRNA-specific 2-thiouridylase MnmA (368 aa).

ATP-binding positions include 11–18 and M37; that span reads GMSGGVDS. The segment at 97–99 is interaction with target base in tRNA; that stretch reads NPD. Residue C102 is the Nucleophile of the active site. C102 and C199 are disulfide-bonded. Position 127 (G127) interacts with ATP. An interaction with tRNA region spans residues 149–151; sequence KDQ. C199 functions as the Cysteine persulfide intermediate in the catalytic mechanism. An interaction with tRNA region spans residues 311–312; that stretch reads RY.

Belongs to the MnmA/TRMU family. As to quaternary structure, interacts with TusE.

It is found in the cytoplasm. The enzyme catalyses S-sulfanyl-L-cysteinyl-[protein] + uridine(34) in tRNA + AH2 + ATP = 2-thiouridine(34) in tRNA + L-cysteinyl-[protein] + A + AMP + diphosphate + H(+). Functionally, catalyzes the 2-thiolation of uridine at the wobble position (U34) of tRNA(Lys), tRNA(Glu) and tRNA(Gln), leading to the formation of s(2)U34, the first step of tRNA-mnm(5)s(2)U34 synthesis. Sulfur is provided by IscS, via a sulfur-relay system. Binds ATP and its substrate tRNAs. The chain is tRNA-specific 2-thiouridylase MnmA from Salmonella arizonae (strain ATCC BAA-731 / CDC346-86 / RSK2980).